The sequence spans 215 residues: Cytochrome b6 (215 aa).

Residues 32 to 52 traverse the membrane as a helical segment; it reads IFYCLGGITLTCFLIQFATGF. Heme c is bound at residue C35. Positions 86 and 100 each coordinate heme b. The next 3 membrane-spanning stretches (helical) occupy residues 90–110, 116–136, and 186–206; these read ASMM…TGGF, LTWV…VTGY, and LHTF…FLMI. Heme b contacts are provided by H187 and H202.

This sequence belongs to the cytochrome b family. PetB subfamily. The 4 large subunits of the cytochrome b6-f complex are cytochrome b6, subunit IV (17 kDa polypeptide, PetD), cytochrome f and the Rieske protein, while the 4 small subunits are PetG, PetL, PetM and PetN. The complex functions as a dimer. Heme b is required as a cofactor. Heme c serves as cofactor.

Its subcellular location is the cellular thylakoid membrane. Functionally, component of the cytochrome b6-f complex, which mediates electron transfer between photosystem II (PSII) and photosystem I (PSI), cyclic electron flow around PSI, and state transitions. In Synechococcus elongatus (strain ATCC 33912 / PCC 7942 / FACHB-805) (Anacystis nidulans R2), this protein is Cytochrome b6.